A 180-amino-acid chain; its full sequence is Putative peroxiredoxin YkuU (180 aa).

One can recognise a Thioredoxin domain in the interval 4–165 (RMVGKQAPRF…TLRVLQALQT (162 aa)). Residue Cys52 is the Cysteine sulfenic acid (-SOH) intermediate of the active site.

Belongs to the peroxiredoxin family. AhpC/Prx1 subfamily. In terms of assembly, homodimer; disulfide-linked, upon oxidation.

The protein localises to the cytoplasm. It carries out the reaction a hydroperoxide + [protein]-dithiol = [protein]-disulfide + an alcohol + H2O. Thiol-specific peroxidase that catalyzes the reduction of hydrogen peroxide and organic hydroperoxides to water and alcohols, respectively. Plays a role in cell protection against oxidative stress by detoxifying peroxides. In Bacillus subtilis (strain 168), this protein is Putative peroxiredoxin YkuU (ykuU).